We begin with the raw amino-acid sequence, 119 residues long: Large ribosomal subunit protein uL22c (119 aa).

Belongs to the universal ribosomal protein uL22 family. Part of the 50S ribosomal subunit.

The protein resides in the plastid. The protein localises to the chloroplast. In terms of biological role, this protein binds specifically to 23S rRNA. The globular domain of the protein is located near the polypeptide exit tunnel on the outside of the subunit, while an extended beta-hairpin is found that lines the wall of the exit tunnel in the center of the 70S ribosome. In Mesostigma viride (Green alga), this protein is Large ribosomal subunit protein uL22c (rpl22).